Reading from the N-terminus, the 103-residue chain is Large ribosomal subunit protein bL21 (103 aa).

This sequence belongs to the bacterial ribosomal protein bL21 family. In terms of assembly, part of the 50S ribosomal subunit. Contacts protein L20.

Its function is as follows. This protein binds to 23S rRNA in the presence of protein L20. This Lactobacillus helveticus (strain DPC 4571) protein is Large ribosomal subunit protein bL21.